A 122-amino-acid chain; its full sequence is NADH-quinone oxidoreductase subunit A (122 aa).

The next 3 membrane-spanning stretches (helical) occupy residues 10–30 (LIIFVFLCLGVLLPIGALTAG), 67–87 (FALLFVIFDIETVFLYPWAVV), and 91–111 (LGLFALVEMIIFIVLLAIGLI).

Belongs to the complex I subunit 3 family. As to quaternary structure, NDH-1 is composed of 14 different subunits. Subunits NuoA, H, J, K, L, M, N constitute the membrane sector of the complex.

Its subcellular location is the cell membrane. It catalyses the reaction a quinone + NADH + 5 H(+)(in) = a quinol + NAD(+) + 4 H(+)(out). NDH-1 shuttles electrons from NADH, via FMN and iron-sulfur (Fe-S) centers, to quinones in the respiratory chain. The immediate electron acceptor for the enzyme in this species is believed to be a menaquinone. Couples the redox reaction to proton translocation (for every two electrons transferred, four hydrogen ions are translocated across the cytoplasmic membrane), and thus conserves the redox energy in a proton gradient. The polypeptide is NADH-quinone oxidoreductase subunit A (Geobacillus kaustophilus (strain HTA426)).